The sequence spans 359 residues: Small ribosomal subunit protein mS22 (359 aa).

The disordered stretch occupies residues 40-65 (RPQPFEVGQPRRLLSSEAESGSSEVK). Ser-54 is subject to Phosphoserine. Lys-210 carries the N6-acetyllysine modification.

This sequence belongs to the mitochondrion-specific ribosomal protein mS22 family. In terms of assembly, component of the mitochondrial ribosome small subunit (28S) which comprises a 12S rRNA and about 30 distinct proteins.

Its subcellular location is the mitochondrion. The protein is Small ribosomal subunit protein mS22 (Mrps22) of Mus musculus (Mouse).